The primary structure comprises 544 residues: Methionine--tRNA ligase (544 aa).

The short motif at 10–20 is the 'HIGH' region element; it reads PYANGSLHLGH. Positions 141, 144, 153, and 156 each coordinate Zn(2+). The 'KMSKS' region signature appears at 329 to 333; that stretch reads KLSTS. Thr-332 serves as a coordination point for ATP.

It belongs to the class-I aminoacyl-tRNA synthetase family. MetG type 1 subfamily. Monomer. The cofactor is Zn(2+).

Its subcellular location is the cytoplasm. It carries out the reaction tRNA(Met) + L-methionine + ATP = L-methionyl-tRNA(Met) + AMP + diphosphate. Is required not only for elongation of protein synthesis but also for the initiation of all mRNA translation through initiator tRNA(fMet) aminoacylation. This is Methionine--tRNA ligase from Bacillus cereus (strain AH187).